Reading from the N-terminus, the 104-residue chain is L-rhamnose mutarotase (104 aa).

Residue Tyr-18 participates in substrate binding. His-22 serves as the catalytic Proton donor. Substrate contacts are provided by residues Tyr-41 and 76 to 77; that span reads WW.

This sequence belongs to the rhamnose mutarotase family. Homodimer.

It is found in the cytoplasm. It carries out the reaction alpha-L-rhamnose = beta-L-rhamnose. Its pathway is carbohydrate metabolism; L-rhamnose metabolism. In terms of biological role, involved in the anomeric conversion of L-rhamnose. The sequence is that of L-rhamnose mutarotase from Jannaschia sp. (strain CCS1).